We begin with the raw amino-acid sequence, 238 residues long: 2,3-bisphosphoglycerate-dependent phosphoglycerate mutase (238 aa).

Substrate is bound by residues 8–15 (RHGQSEWN), 21–22 (TG), Arg60, 86–89 (ERHY), Lys97, 113–114 (RR), and 182–183 (GN). Residue His9 is the Tele-phosphohistidine intermediate of the active site. Residue Glu86 is the Proton donor/acceptor of the active site.

It belongs to the phosphoglycerate mutase family. BPG-dependent PGAM subfamily. Homodimer.

It carries out the reaction (2R)-2-phosphoglycerate = (2R)-3-phosphoglycerate. Its pathway is carbohydrate degradation; glycolysis; pyruvate from D-glyceraldehyde 3-phosphate: step 3/5. In terms of biological role, catalyzes the interconversion of 2-phosphoglycerate and 3-phosphoglycerate. In Pelagibacter ubique (strain HTCC1062), this protein is 2,3-bisphosphoglycerate-dependent phosphoglycerate mutase.